An 814-amino-acid polypeptide reads, in one-letter code: MDFLFLLLERKNKHMGKKRVVLLWLSIFISFSSAEITEESPLSIGQTLSSSNGVYELGFFSFNNSQNQYVGISFKGIIPRVVVWVANREKPVTDSAANLVISSNGSLQLFNGKHGVVWSSGKALASNGSRVELLDSGNLVVIEKVSGRTLWESFEHLGDTLLPHSTIMYNVHTGEKRGLTSWKSYTDPSPGDFVVLITPQVPSQGFLMRGSTPYFRSGPWAKTKFTGLPQMDESYTSPFSLTQDVNGSGYYSYFDRDNKRSRIRLTPDGSMKALRYNGMDWDTTYEGPANSCDIYGVCGPFGFCVISVPPKCKCFKGFIPKSIEEWKTGNWTSGCVRRSELHCQGNSTGKDANVFHTVPNIKPPDFYEYADSVDAEECQQNCLNNCSCLAFAYIPGIGCLMWSKDLMDTVQFAAGGELLSIRLARSELDVNKRKKTIIAITVSLTLFVILGFTAFGFWRRRVEQNALISEDAWRNDLQTQDVPGLEYFEMNTIQTATNNFSLSNKLGHGGFGSVYKGKLQDGREIAVKRLSSSSEQGKQEFMNEIVLISKLQHRNLVRVLGCCVEGTEKLLIYEFMKNKSLDTFVFDSKKRLEIDWPKRFDIIQGIARGLLYLHRDSRLRIIHRDLKVSNILLDEKMNPKISDFGLARMFHGTEYQDKTRRVVGTLGYMSPEYAWAGVFSEKSDIYSFGVLLLEIISGEKISRFSYGEEGKTLLAYAWECWCGARGVNLLDQALGDSCHPYEVGRCVQIGLLCVQYQPADRPNTLELLSMLTTTSDLPLPKQPTFVVHTRDGKSPSNDSMITVNEMTESVIHGR.

Residues 1 to 34 (MDFLFLLLERKNKHMGKKRVVLLWLSIFISFSSA) form the signal peptide. The 120-residue stretch at 35–154 (EITEESPLSI…VSGRTLWESF (120 aa)) folds into the Bulb-type lectin domain. At 35 to 436 (EITEESPLSI…ELDVNKRKKT (402 aa)) the chain is on the extracellular side. N-linked (GlcNAc...) asparagine glycosylation is found at N63, N104, N127, and N246. An EGF-like; atypical domain is found at 288 to 324 (PANSCDIYGVCGPFGFCVISVPPKCKCFKGFIPKSIE). 2 disulfide bridges follow: C292/C304 and C298/C312. N-linked (GlcNAc...) asparagine glycans are attached at residues N330, N346, and N385. The PAN domain occupies 343 to 425 (CQGNSTGKDA…GELLSIRLAR (83 aa)). 2 disulfide bridges follow: C378–C399 and C382–C388. The chain crosses the membrane as a helical span at residues 437-457 (IIAITVSLTLFVILGFTAFGF). Residues 458 to 814 (WRRRVEQNAL…EMTESVIHGR (357 aa)) lie on the Cytoplasmic side of the membrane. The Protein kinase domain occupies 500 to 785 (FSLSNKLGHG…DLPLPKQPTF (286 aa)). ATP contacts are provided by residues 506–514 (LGHGGFGSV) and K528. Phosphoserine is present on residues S534 and S549. Positions 589 to 606 (KKRLEIDWPKRFDIIQGI) are caM-binding. Residue D625 is the Proton acceptor of the active site. 2 positions are modified to phosphoserine: S629 and S642. Position 659 is a phosphothreonine (T659). S702 and S796 each carry phosphoserine.

It belongs to the protein kinase superfamily. Ser/Thr protein kinase family.

Its subcellular location is the cell membrane. The enzyme catalyses L-seryl-[protein] + ATP = O-phospho-L-seryl-[protein] + ADP + H(+). It catalyses the reaction L-threonyl-[protein] + ATP = O-phospho-L-threonyl-[protein] + ADP + H(+). The sequence is that of G-type lectin S-receptor-like serine/threonine-protein kinase At1g61400 from Arabidopsis thaliana (Mouse-ear cress).